A 367-amino-acid polypeptide reads, in one-letter code: Quinolinate synthase (367 aa).

Iminosuccinate contacts are provided by His45 and Ser62. Cys109 contributes to the [4Fe-4S] cluster binding site. Iminosuccinate contacts are provided by residues 140-142 (YVN) and Ser161. Residue Cys229 coordinates [4Fe-4S] cluster. Residues 255 to 257 (HPE) and Thr272 each bind iminosuccinate. Cys319 provides a ligand contact to [4Fe-4S] cluster.

It belongs to the quinolinate synthase family. Type 3 subfamily. [4Fe-4S] cluster serves as cofactor.

Its subcellular location is the cytoplasm. It catalyses the reaction iminosuccinate + dihydroxyacetone phosphate = quinolinate + phosphate + 2 H2O + H(+). It participates in cofactor biosynthesis; NAD(+) biosynthesis; quinolinate from iminoaspartate: step 1/1. Catalyzes the condensation of iminoaspartate with dihydroxyacetone phosphate to form quinolinate. The sequence is that of Quinolinate synthase from Halalkalibacterium halodurans (strain ATCC BAA-125 / DSM 18197 / FERM 7344 / JCM 9153 / C-125) (Bacillus halodurans).